The primary structure comprises 831 residues: Translation initiation factor IF-2 (831 aa).

Positions 329-499 (TRAPVVTVMG…LLISEMQDLK (171 aa)) constitute a tr-type G domain. The segment at 338-345 (GHVDHGKT) is G1. 338–345 (GHVDHGKT) provides a ligand contact to GTP. Residues 363 to 367 (GITQH) form a G2 region. The segment at 385-388 (DTPG) is G3. Residues 385–389 (DTPGH) and 439–442 (NKID) contribute to the GTP site. Residues 439-442 (NKID) are G4. The tract at residues 475 to 477 (SAL) is G5.

The protein belongs to the TRAFAC class translation factor GTPase superfamily. Classic translation factor GTPase family. IF-2 subfamily.

Its subcellular location is the cytoplasm. Functionally, one of the essential components for the initiation of protein synthesis. Protects formylmethionyl-tRNA from spontaneous hydrolysis and promotes its binding to the 30S ribosomal subunits. Also involved in the hydrolysis of GTP during the formation of the 70S ribosomal complex. The sequence is that of Translation initiation factor IF-2 (infB) from Rickettsia prowazekii (strain Madrid E).